Here is an 89-residue protein sequence, read N- to C-terminus: Small ribosomal subunit protein uS15 (89 aa).

The protein belongs to the universal ribosomal protein uS15 family. In terms of assembly, part of the 30S ribosomal subunit. Forms a bridge to the 50S subunit in the 70S ribosome, contacting the 23S rRNA.

In terms of biological role, one of the primary rRNA binding proteins, it binds directly to 16S rRNA where it helps nucleate assembly of the platform of the 30S subunit by binding and bridging several RNA helices of the 16S rRNA. Forms an intersubunit bridge (bridge B4) with the 23S rRNA of the 50S subunit in the ribosome. This is Small ribosomal subunit protein uS15 from Roseobacter denitrificans (strain ATCC 33942 / OCh 114) (Erythrobacter sp. (strain OCh 114)).